We begin with the raw amino-acid sequence, 447 residues long: Phosphoglucosamine mutase (447 aa).

Catalysis depends on S100, which acts as the Phosphoserine intermediate. The Mg(2+) site is built by S100, D240, D242, and D244. S100 carries the phosphoserine modification.

This sequence belongs to the phosphohexose mutase family. Mg(2+) is required as a cofactor. In terms of processing, activated by phosphorylation.

The enzyme catalyses alpha-D-glucosamine 1-phosphate = D-glucosamine 6-phosphate. Catalyzes the conversion of glucosamine-6-phosphate to glucosamine-1-phosphate. This Clostridium botulinum (strain Eklund 17B / Type B) protein is Phosphoglucosamine mutase.